The following is a 92-amino-acid chain: Subtilisin inhibitor 1 (92 aa).

Over residues 1–12 the composition is skewed to polar residues; sequence QEQGTNPSQEQN. Residues 1-31 are disordered; sequence QEQGTNPSQEQNVPLPRNYKQALETNTPTKT.

This sequence belongs to the protease inhibitor I13 (potato type I serine protease inhibitor) family.

Functionally, inhibitor of subtilisin. The protein is Subtilisin inhibitor 1 of Phaseolus angularis (Azuki bean).